The sequence spans 126 residues: Holo-[acyl-carrier-protein] synthase (126 aa).

Residues Asp-9 and Glu-58 each contribute to the Mg(2+) site.

This sequence belongs to the P-Pant transferase superfamily. AcpS family. Mg(2+) serves as cofactor.

The protein localises to the cytoplasm. The catalysed reaction is apo-[ACP] + CoA = holo-[ACP] + adenosine 3',5'-bisphosphate + H(+). Functionally, transfers the 4'-phosphopantetheine moiety from coenzyme A to a Ser of acyl-carrier-protein. The chain is Holo-[acyl-carrier-protein] synthase from Shewanella denitrificans (strain OS217 / ATCC BAA-1090 / DSM 15013).